The following is a 489-amino-acid chain: Cytochrome P450 monooxygenase tazI (489 aa).

Cys-433 serves as a coordination point for heme.

The protein belongs to the cytochrome P450 family. Requires heme as cofactor.

It participates in secondary metabolite biosynthesis. Cytochrome P450 monooxygenase; part of the gene cluster that mediates the biosynthesis of azaterrilone A and other azaphilones, a class of fungal metabolites characterized by a highly oxygenated pyrano-quinone bicyclic core and exhibiting a broad range of bioactivities. The first step of the pathway begins with the non-reducing polyketide synthase tazA that assembles one acetyl-CoA starter unit, five malonyl-CoA units, and catalyzes a series of Claisen condensations, methylation, PT-mediated cyclization, and finally releases the first hexaketide precursor through the R-domain. The tazA product then undergoes reduction on its terminal ketone and the following pyran-ring formation by yet undetermined enzyme(s). Dehydration and enoyl reduction, possibly involving the trans-enoyl reductase tazE leads to the next intermediate. TazD is predicted as an acetyltransferase and might catalyze the acetylation steps leading to the synthesis of azaterrilone A. Azaterrilone A is not the final product of the taz pathway and both the highly reducing polyketide synthase tazB and the dual enzyme tazHJ catalyze late steps of the pathway, leading to the production of the 2 final stereoisomers that contain additional polyketide modification whose structures have still to be determined. The protein is Cytochrome P450 monooxygenase tazI of Aspergillus terreus (strain NIH 2624 / FGSC A1156).